The following is a 401-amino-acid chain: Multidrug resistance protein MdtH (401 aa).

The Cytoplasmic segment spans residues 1–12; that stretch reads MSRVSQARNLGK. The chain crosses the membrane as a helical span at residues 13 to 33; it reads YFLLIDNMLVVLGFFVVFPLV. Over 34–98 the chain is Periplasmic; it reads SIRFVDQMGW…GFATMGIAHE (65 aa). The chain crosses the membrane as a helical span at residues 99–116; sequence PWLLWFSCLLSGLGGTLF. Residues 117-137 lie on the Cytoplasmic side of the membrane; that stretch reads DPPRSALVVKLMPQQRGRFFS. A helical membrane pass occupies residues 138 to 158; the sequence is LLMMQDSAGAVIGALLGSWLL. Over 159 to 163 the chain is Periplasmic; sequence QYDFR. Residues 164–184 form a helical membrane-spanning segment; that stretch reads LVCATGAVLFVLCAAFNAWLL. Residues 185 to 212 are Cytoplasmic-facing; it reads PAWKLSTIRTPVREGMTRVMRDKRFVTY. A helical transmembrane segment spans residues 213–233; the sequence is VLTLAGYYMLAVQVMLMLPIM. Topologically, residues 234 to 242 are periplasmic; sequence VNDVAGAPS. Residues 243 to 263 traverse the membrane as a helical segment; the sequence is AVKWMYAIEACLSLTLLYPIA. Over 264–275 the chain is Cytoplasmic; sequence RWSEKHFRLEHR. The helical transmembrane segment at 276–296 threads the bilayer; it reads LMAGLLIMSLSMMPVGMVSGL. At 297–298 the chain is on the periplasmic side; sequence QQ. Residues 299 to 319 form a helical membrane-spanning segment; it reads LFTLICLFYIGSIIAEPARET. The Cytoplasmic segment spans residues 320–338; the sequence is LSASLADARARGSYMGFSR. The helical transmembrane segment at 339 to 359 threads the bilayer; the sequence is LGLAIGGTIGYIGGGWLFDLG. Residues 360–366 lie on the Periplasmic side of the membrane; the sequence is KSAHQPE. A helical membrane pass occupies residues 367 to 387; sequence LPWMMLGIIGIFTFLALGWQF. At 388–401 the chain is on the cytoplasmic side; the sequence is SQKRAARRLLERDA.

This sequence belongs to the major facilitator superfamily. DHA1 family. MdtH (TC 2.A.1.2.21) subfamily.

Its subcellular location is the cell inner membrane. In Shigella dysenteriae serotype 1 (strain Sd197), this protein is Multidrug resistance protein MdtH.